Here is a 207-residue protein sequence, read N- to C-terminus: Small ribosomal subunit protein uS4 (207 aa).

The tract at residues lysine 31–glutamine 55 is disordered. Residues glycine 42–glycine 53 show a composition bias toward polar residues. The S4 RNA-binding domain occupies serine 97–leucine 160.

The protein belongs to the universal ribosomal protein uS4 family. In terms of assembly, part of the 30S ribosomal subunit. Contacts protein S5. The interaction surface between S4 and S5 is involved in control of translational fidelity.

In terms of biological role, one of the primary rRNA binding proteins, it binds directly to 16S rRNA where it nucleates assembly of the body of the 30S subunit. Its function is as follows. With S5 and S12 plays an important role in translational accuracy. This chain is Small ribosomal subunit protein uS4, found in Burkholderia thailandensis (strain ATCC 700388 / DSM 13276 / CCUG 48851 / CIP 106301 / E264).